The sequence spans 782 residues: Ribosome biogenesis protein ERB1 (782 aa).

Disordered regions lie at residues Met1–Lys123 and Pro339–Glu361. Residues Ser35–Glu86 are compositionally biased toward acidic residues. Positions Val105–Lys123 are enriched in basic and acidic residues. WD repeat units lie at residues Gly433 to Ser472, Asn476 to Ala516, Thr567 to Pro609, Lys612 to Val650, Pro653 to Lys692, Phe696 to Glu736, and Val752 to Met782.

It belongs to the WD repeat BOP1/ERB1 family. Component of the NOP7 complex, composed of ERB1, NOP7 and YTM1. The complex is held together by ERB1, which interacts with NOP7 via its N-terminal domain and with YTM1 via a high-affinity interaction between the seven-bladed beta-propeller domains of the 2 proteins. The NOP7 complex associates with the 66S pre-ribosome.

The protein resides in the nucleus. It is found in the nucleolus. The protein localises to the nucleoplasm. In terms of biological role, component of the NOP7 complex, which is required for maturation of the 25S and 5.8S ribosomal RNAs and formation of the 60S ribosome. This Chaetomium globosum (strain ATCC 6205 / CBS 148.51 / DSM 1962 / NBRC 6347 / NRRL 1970) (Soil fungus) protein is Ribosome biogenesis protein ERB1.